A 55-amino-acid chain; its full sequence is uncharacterized protein (55 aa).

This is an uncharacterized protein from Rickettsia prowazekii (strain Madrid E).